A 551-amino-acid chain; its full sequence is Chaperonin GroEL (551 aa).

ATP-binding positions include 29–32 (TMGP), K50, 86–90 (DGTTT), G414, 478–480 (NAA), and D494.

This sequence belongs to the chaperonin (HSP60) family. Forms a cylinder of 14 subunits composed of two heptameric rings stacked back-to-back. Interacts with the co-chaperonin GroES.

The protein localises to the cytoplasm. It catalyses the reaction ATP + H2O + a folded polypeptide = ADP + phosphate + an unfolded polypeptide.. Functionally, together with its co-chaperonin GroES, plays an essential role in assisting protein folding. The GroEL-GroES system forms a nano-cage that allows encapsulation of the non-native substrate proteins and provides a physical environment optimized to promote and accelerate protein folding. In Legionella jeonii, this protein is Chaperonin GroEL.